The following is a 452-amino-acid chain: Cytoplasmic tRNA 2-thiolation protein 2 (452 aa).

This sequence belongs to the CTU2/NCS2 family.

The protein resides in the cytoplasm. Its pathway is tRNA modification; 5-methoxycarbonylmethyl-2-thiouridine-tRNA biosynthesis. Functionally, plays a central role in 2-thiolation of mcm(5)S(2)U at tRNA wobble positions of tRNA(Lys), tRNA(Glu) and tRNA(Gln). May act by forming a heterodimer with NCS6 that ligates sulfur from thiocarboxylated URM1 onto the uridine of tRNAs at wobble position. Prior mcm(5) tRNA modification by the elongator complex is required for 2-thiolation. May also be involved in protein urmylation. The sequence is that of Cytoplasmic tRNA 2-thiolation protein 2 from Candida albicans (strain SC5314 / ATCC MYA-2876) (Yeast).